The following is a 309-amino-acid chain: Putative F-box protein At4g05475 (309 aa).

The segment at 1–26 (MATSTTLQSLLMKEDEEQRNKRRTTS) is disordered. Residues 37–84 (RINWVDLPPELTTSILLRLSVTDILDNARKLCRAWRRICKDPSMWRKI) enclose the F-box domain.

This is Putative F-box protein At4g05475 from Arabidopsis thaliana (Mouse-ear cress).